Reading from the N-terminus, the 74-residue chain is UPF0291 protein EF_0064 (74 aa).

The tract at residues 53-74 (YDPTGEDVTPEKLKEEQQKYFD) is disordered. Positions 61-74 (TPEKLKEEQQKYFD) are enriched in basic and acidic residues.

The protein belongs to the UPF0291 family.

It localises to the cytoplasm. This Enterococcus faecalis (strain ATCC 700802 / V583) protein is UPF0291 protein EF_0064.